A 269-amino-acid polypeptide reads, in one-letter code: Holocytochrome-c synthase (269 aa).

The disordered stretch occupies residues 1 to 72 (MGWFWADQKT…ASKQPGQKMD (72 aa)). HRM repeat units follow at residues 25–30 (GCPVMH) and 41–46 (ECPVMQ).

Belongs to the cytochrome c-type heme lyase family.

The protein resides in the mitochondrion inner membrane. Its subcellular location is the mitochondrion intermembrane space. The enzyme catalyses holo-[cytochrome c] = apo-[cytochrome c] + heme b. In terms of biological role, lyase that catalyzes the covalent linking of the heme group to the cytochrome C apoprotein to produce the mature functional cytochrome. The sequence is that of Holocytochrome-c synthase (CYC3) from Saccharomyces cerevisiae (strain ATCC 204508 / S288c) (Baker's yeast).